A 375-amino-acid chain; its full sequence is Growth/differentiation factor 8 (375 aa).

The first 18 residues, 1 to 18 (MQRLQICVYIYLFVLIVA), serve as a signal peptide directing secretion. Residues 19–266 (GPVDLSENSE…VTDTPKRSRR (248 aa)) constitute a propeptide that is removed on maturation. A glycan (N-linked (GlcNAc...) asparagine) is linked at Asn71. 4 cysteine pairs are disulfide-bonded: Cys272/Cys282, Cys281/Cys340, Cys309/Cys372, and Cys313/Cys374.

The protein belongs to the TGF-beta family. In terms of assembly, homodimer; disulfide-linked. Interacts with WFIKKN2, leading to inhibit its activity. Interacts with FSTL3. Post-translationally, synthesized as large precursor molecule that undergoes proteolytic cleavage to generate an N-terminal propeptide and a disulfide linked C-terminal dimer, which is the biologically active molecule. The circulating form consists of a latent complex of the C-terminal dimer and other proteins, including its propeptide, which maintain the C-terminal dimer in a latent, inactive state. Ligand activation requires additional cleavage of the prodomain by a tolloid-like metalloproteinase.

It localises to the secreted. Its function is as follows. Acts specifically as a negative regulator of skeletal muscle growth. The polypeptide is Growth/differentiation factor 8 (MSTN) (Canis lupus familiaris (Dog)).